The primary structure comprises 426 residues: Adenylosuccinate synthetase (426 aa).

GTP contacts are provided by residues 12–18 (GDEGKGK) and 40–42 (GHT). Residue Asp-13 is the Proton acceptor of the active site. Mg(2+) contacts are provided by Asp-13 and Gly-40. Residues 13–16 (DEGK), 38–41 (NAGH), Thr-131, Arg-145, Gln-226, Thr-241, and Arg-305 each bind IMP. His-41 functions as the Proton donor in the catalytic mechanism. Position 301–307 (301–307 (ATTGRKR)) interacts with substrate. GTP is bound by residues Arg-307, 333-335 (KLD), and 415-417 (SVG).

The protein belongs to the adenylosuccinate synthetase family. In terms of assembly, homodimer. Requires Mg(2+) as cofactor.

The protein localises to the cytoplasm. It catalyses the reaction IMP + L-aspartate + GTP = N(6)-(1,2-dicarboxyethyl)-AMP + GDP + phosphate + 2 H(+). Its pathway is purine metabolism; AMP biosynthesis via de novo pathway; AMP from IMP: step 1/2. Its function is as follows. Plays an important role in the de novo pathway of purine nucleotide biosynthesis. Catalyzes the first committed step in the biosynthesis of AMP from IMP. In Nitratidesulfovibrio vulgaris (strain ATCC 29579 / DSM 644 / CCUG 34227 / NCIMB 8303 / VKM B-1760 / Hildenborough) (Desulfovibrio vulgaris), this protein is Adenylosuccinate synthetase.